The sequence spans 316 residues: MSRPGEHRVVHTLRTQAPARRLYELVARVEDWPAVFEPTVHVQVLERGPGTERFRIWARVGGRVKTWTSRRTLDPDTLRVTFRQELTQPPIASMGGSWEFRGDGDGTEVVLTHDFAAVDEAALPGLREALDANSGKELAALVALAERRQPPEELVFTFEDTLRVPSGDDAYAFIERSDLWQERLPHVRKVTLTEEAAGTGPAETRDMTVQDMTMETVTTDGGTHTTRSIRLCVPARSIVYKQLVPPALLSGHCGAWTFGEDTVTARHTVAIDPARVEEVLGKGATVADARTHLREVLGANSRATLRHAAAAAGPAS.

Its pathway is antibiotic biosynthesis; actinorhodin biosynthesis. Functionally, is needed for correct cyclization of the oligoketide leading to isochromanequinone formation. The polypeptide is Actinorhodin polyketide synthase bifunctional cyclase/dehydratase (Streptomyces coelicolor (strain ATCC BAA-471 / A3(2) / M145)).